Consider the following 417-residue polypeptide: Phosphoglycerate kinase 1 (417 aa).

Ser2 is modified (N-acetylserine). 2 positions are modified to phosphoserine: Ser2 and Ser4. N6-succinyllysine is present on Lys6. At Lys11 the chain carries N6-acetyllysine. Residues Val23, Asp24, Phe25, Asn26, Gln38, and Arg39 each contribute to the (2R)-3-phosphoglycerate site. The mitochondrial targeting region exposed following cis-trans isomerization by PIN1 and recognized by the TOM complex for mitochondrial translocation of the protein stretch occupies residues Gln38–Ala43. An N6-acetyllysine; alternate modification is found at Lys48. Lys48 carries the N6-succinyllysine; alternate modification. Positions 62, 63, 65, and 66 each coordinate (2R)-3-phosphoglycerate. At Lys75 the chain carries N6-acetyllysine. Phosphotyrosine is present on Tyr76. N6-acetyllysine is present on residues Lys86 and Lys91. Position 97 is an N6-acetyllysine; alternate (Lys97). An N6-(2-hydroxyisobutyryl)lysine; alternate modification is found at Lys97. (2R)-3-phosphoglycerate contacts are provided by Leu122 and Arg123. Lys131 bears the N6-acetyllysine; alternate mark. Lys131 bears the N6-malonyllysine; alternate mark. An N6-acetyllysine modification is found at Lys146. Residues His170 and Arg171 each contribute to the (2R)-3-phosphoglycerate site. Lys191 carries the post-translational modification N6-succinyllysine. Position 196 is a phosphotyrosine (Tyr196). N6-acetyllysine is present on Lys199. Ser203 is subject to Phosphoserine. Gly214 contributes to the ADP binding site. Gly214 contacts CDP. Residues Ala215 and Lys216 each coordinate AMP. Ala215 contacts ATP. Ala215 contacts Mg(2+). Lys216 is modified (N6-(2-hydroxyisobutyryl)lysine). Residues Ala218 and Asp219 each coordinate Mg(2+). Asp219 is a CDP binding site. Position 220 (Lys220) interacts with AMP. Lys220 lines the ATP pocket. Lys220 carries the N6-(2-hydroxyisobutyryl)lysine modification. Gly238 contacts ADP. Gly238 contributes to the CDP binding site. Residue Gly239 coordinates AMP. Gly239 lines the ATP pocket. Lys267 and Lys291 each carry N6-acetyllysine. An AMP-binding site is contributed by Gly313. An ATP-binding site is contributed by Gly313. Position 323 is an N6-(2-hydroxyisobutyryl)lysine (Lys323). Positions 338, 340, and 343 each coordinate CDP. Phe343 is an ADP binding site. Residue Glu344 coordinates AMP. Glu344 contacts ATP. Position 361 is an N6-acetyllysine (Lys361). The ATP site is built by Asp375 and Thr376. Asp375 is a Mg(2+) binding site.

This sequence belongs to the phosphoglycerate kinase family. In terms of assembly, monomer. Interacts with kinase MAPK1/ERK2; the interaction is direct, occurs under hypoxic conditions, and promotes its interaction with PIN1. Interacts with peptidyl-prolyl cis-trans isomerase PIN1; the interaction is direct, occurs under hypoxic conditions, and targets the protein to the mitochondrion by promoting interactions with the TOM complex. Interacts with mitochondrial circRNA mcPGK1 (via its 2nd stem-loop); the interaction is direct and targets the protein to the mitochondrion by promoting interactions with the TOM complex. Interacts with pyruvate dehydrogenase kinase PDK1; the interaction is direct, occurs under hypoxic conditions and leads to PDK1-mediated inhibition of pyruvate dehydrogenase complex activity. Mg(2+) is required as a cofactor. Phosphorylated at Ser-203 by MAPK1/ERK2 under hypoxic conditions, which promotes its mitochondrial targeting.

It localises to the cytoplasm. The protein resides in the cytosol. The protein localises to the mitochondrion matrix. The enzyme catalyses (2R)-3-phosphoglycerate + ATP = (2R)-3-phospho-glyceroyl phosphate + ADP. The catalysed reaction is L-seryl-[protein] + ATP = O-phospho-L-seryl-[protein] + ADP + H(+). Its pathway is carbohydrate degradation; glycolysis; pyruvate from D-glyceraldehyde 3-phosphate: step 2/5. In terms of biological role, catalyzes one of the two ATP producing reactions in the glycolytic pathway via the reversible conversion of 1,3-diphosphoglycerate to 3-phosphoglycerate. Both L- and D- forms of purine and pyrimidine nucleotides can be used as substrates, but the activity is much lower on pyrimidines. In addition to its role as a glycolytic enzyme, it seems that PGK-1 acts as a polymerase alpha cofactor protein (primer recognition protein). Acts as a protein kinase when localized to the mitochondrion where it phosphorylates pyruvate dehydrogenase kinase PDK1 to inhibit pyruvate dehydrogenase complex activity and suppress the formation of acetyl-coenzyme A from pyruvate, and consequently inhibit oxidative phosphorylation and promote glycolysis. May play a role in sperm motility. This Cricetulus griseus (Chinese hamster) protein is Phosphoglycerate kinase 1 (PGK1).